We begin with the raw amino-acid sequence, 176 residues long: ATP-dependent protease subunit HslV (176 aa).

Residue threonine 6 is part of the active site. The Na(+) site is built by serine 161, cysteine 164, and threonine 167.

Belongs to the peptidase T1B family. HslV subfamily. In terms of assembly, a double ring-shaped homohexamer of HslV is capped on each side by a ring-shaped HslU homohexamer. The assembly of the HslU/HslV complex is dependent on binding of ATP.

It localises to the cytoplasm. The enzyme catalyses ATP-dependent cleavage of peptide bonds with broad specificity.. Its activity is regulated as follows. Allosterically activated by HslU binding. Its function is as follows. Protease subunit of a proteasome-like degradation complex believed to be a general protein degrading machinery. The protein is ATP-dependent protease subunit HslV of Aquifex aeolicus (strain VF5).